We begin with the raw amino-acid sequence, 585 residues long: Aspartate--tRNA ligase (585 aa).

E173 is a binding site for L-aspartate. An aspartate region spans residues 197 to 200 (QTLK). Position 219 (R219) interacts with L-aspartate. Residues 219–221 (RDE) and Q228 contribute to the ATP site. H446 is a binding site for L-aspartate. Position 480 (E480) interacts with ATP. An L-aspartate-binding site is contributed by R487. An ATP-binding site is contributed by 532–535 (GLDR).

Belongs to the class-II aminoacyl-tRNA synthetase family. Type 1 subfamily. As to quaternary structure, homodimer.

The protein localises to the cytoplasm. It carries out the reaction tRNA(Asp) + L-aspartate + ATP = L-aspartyl-tRNA(Asp) + AMP + diphosphate. Catalyzes the attachment of L-aspartate to tRNA(Asp) in a two-step reaction: L-aspartate is first activated by ATP to form Asp-AMP and then transferred to the acceptor end of tRNA(Asp). The polypeptide is Aspartate--tRNA ligase (Bacteroides fragilis (strain ATCC 25285 / DSM 2151 / CCUG 4856 / JCM 11019 / LMG 10263 / NCTC 9343 / Onslow / VPI 2553 / EN-2)).